A 348-amino-acid polypeptide reads, in one-letter code: Rhodopsin (348 aa).

The Extracellular segment spans residues 1–33 (TEGPYFYVPMVNTTGIVRSPYEYPQYYLVNPAA). Asn12 carries an N-linked (GlcNAc...) asparagine glycan. A helical membrane pass occupies residues 34-58 (FAILGAYMFFLIIVGFPVNFMTLYV). At 59–70 (TLEHKKLRTPLN) the chain is on the cytoplasmic side. A helical transmembrane segment spans residues 71–93 (YILLNLAVADLFMVIGGFTTTMY). The Extracellular portion of the chain corresponds to 94–107 (TSMHGYFVLGRLGC). Cys107 and Cys184 form a disulfide bridge. The helical transmembrane segment at 108–130 (NLEGFFATLGGMISLWSLAVLAI) threads the bilayer. Residues 131 to 133 (ERW) carry the 'Ionic lock' involved in activated form stabilization motif. At 131–149 (ERWVVVCKPISNFRFGENH) the chain is on the cytoplasmic side. The chain crosses the membrane as a helical span at residues 150–170 (AIMGVSLTWGMALACTVPPLV). Over 171–199 (GWSRYIPEGMQCSCGIDYYTRAEGFNNET) the chain is Extracellular. An N-linked (GlcNAc...) asparagine glycan is attached at Asn197. A helical transmembrane segment spans residues 200–221 (FVLYMFCCHFTVPLTIIFFCYG). Over 222–249 (RLLCAVKEAAAAQQESETTQRAEREVTR) the chain is Cytoplasmic. The chain crosses the membrane as a helical span at residues 250–271 (MVVIMVIGFLVCWLPYASVAWF). The Extracellular segment spans residues 272 to 283 (VFTHQGSEFGPL). Residues 284 to 305 (FMTIPAFFAKSSAIYNPMIYIC) traverse the membrane as a helical segment. Lys293 carries the post-translational modification N6-(retinylidene)lysine. Topologically, residues 306–348 (MNKQFRHCMITTLFCGKNPFEGEEEGASSTKTEASSASSVSPA) are cytoplasmic. A lipid anchor (S-palmitoyl cysteine) is attached at Cys320. Residues 327 to 348 (GEEEGASSTKTEASSASSVSPA) form a disordered region. Positions 332–348 (ASSTKTEASSASSVSPA) are enriched in low complexity.

The protein belongs to the G-protein coupled receptor 1 family. Opsin subfamily. Phosphorylated on some or all of the serine and threonine residues present in the C-terminal region. In terms of processing, contains one covalently linked retinal chromophore.

The protein localises to the membrane. It is found in the cell projection. The protein resides in the cilium. Its subcellular location is the photoreceptor outer segment. Functionally, photoreceptor required for image-forming vision at low light intensity. While most salt water fish species use retinal as chromophore, most freshwater fish use 3-dehydroretinal, or a mixture of retinal and 3-dehydroretinal. Light-induced isomerization of 11-cis to all-trans retinal triggers a conformational change that activates signaling via G-proteins. Subsequent receptor phosphorylation mediates displacement of the bound G-protein alpha subunit by arrestin and terminates signaling. The chain is Rhodopsin (rho) from Sargocentron xantherythrum (Hawaiian squirrelfish).